A 214-amino-acid polypeptide reads, in one-letter code: Eukaryotic translation initiation factor 4E-1B (214 aa).

MRNA contacts are provided by residues 53-54 (WQ), 99-100 (WE), 154-159 (RAKGDK), and 202-204 (TKS).

As to expression, ovary, muscle and testis.

It is found in the cytoplasm. The protein localises to the nucleus. In terms of biological role, does not appear to be a mRNA-cap-binding protein. The protein is Eukaryotic translation initiation factor 4E-1B of Danio rerio (Zebrafish).